A 70-amino-acid polypeptide reads, in one-letter code: DNA-directed RNA polymerase subunit epsilon (70 aa).

The protein belongs to the RNA polymerase subunit epsilon family. As to quaternary structure, RNAP is composed of a core of 2 alpha, a beta and a beta' subunit. The core is associated with a delta subunit, and at least one of epsilon or omega. When a sigma factor is associated with the core the holoenzyme is formed, which can initiate transcription.

The enzyme catalyses RNA(n) + a ribonucleoside 5'-triphosphate = RNA(n+1) + diphosphate. Its function is as follows. A non-essential component of RNA polymerase (RNAP). The sequence is that of DNA-directed RNA polymerase subunit epsilon from Lacticaseibacillus casei (strain BL23) (Lactobacillus casei).